The primary structure comprises 208 residues: Truncated thymidylate kinase (208 aa).

This sequence belongs to the thymidylate kinase family.

Catalyzes the conversion of dTMP to dTDP. This is Truncated thymidylate kinase (TMK) from Ornithodoros (relapsing fever ticks).